Consider the following 279-residue polypeptide: 1D-myo-inositol 2-acetamido-2-deoxy-alpha-D-glucopyranoside deacetylase (279 aa).

Residues histidine 12, aspartate 15, and histidine 146 each coordinate Zn(2+).

This sequence belongs to the MshB deacetylase family. Zn(2+) serves as cofactor.

It catalyses the reaction 1D-myo-inositol 2-acetamido-2-deoxy-alpha-D-glucopyranoside + H2O = 1D-myo-inositol 2-amino-2-deoxy-alpha-D-glucopyranoside + acetate. Catalyzes the deacetylation of 1D-myo-inositol 2-acetamido-2-deoxy-alpha-D-glucopyranoside (GlcNAc-Ins) in the mycothiol biosynthesis pathway. The polypeptide is 1D-myo-inositol 2-acetamido-2-deoxy-alpha-D-glucopyranoside deacetylase (Mycobacteroides abscessus (strain ATCC 19977 / DSM 44196 / CCUG 20993 / CIP 104536 / JCM 13569 / NCTC 13031 / TMC 1543 / L948) (Mycobacterium abscessus)).